The following is a 157-amino-acid chain: Epithelial membrane protein 1 (157 aa).

A helical transmembrane segment spans residues 1-21 (MLVLLAGIFVVHIATVIMLFV). N-linked (GlcNAc...) asparagine glycosylation is found at Asn43 and Asn46. A run of 3 helical transmembrane segments spans residues 67–87 (FMIL…FQLF), 95–115 (FFLS…GVSI), and 134–154 (YILG…YLVL).

This sequence belongs to the PMP-22/EMP/MP20 family.

The protein localises to the membrane. This chain is Epithelial membrane protein 1 (EMP1), found in Homo sapiens (Human).